We begin with the raw amino-acid sequence, 194 residues long: Fatty acid metabolism regulator protein (194 aa).

The region spanning 5 to 65 is the HTH tetR-type domain; the sequence is RPKYMQIIDA…SLFKEKMGQF (61 aa). A DNA-binding region (H-T-H motif) is located at residues 28–47; that stretch reads QVSKIAKQAGVADGTIYLYF.

As to quaternary structure, homodimer. Binds to DNA.

The protein localises to the cytoplasm. Functionally, transcriptional regulator in fatty acid degradation. Represses transcription of genes required for fatty acid transport and beta-oxidation, including acdA, fadA, fadB, fadE, fadF, fadG, fadH, fadM, fadN, lcfA and lcfB. Binding of FadR to DNA is specifically inhibited by long chain fatty acyl-CoA compounds of 14-20 carbon atoms in length. The chain is Fatty acid metabolism regulator protein (fadR) from Bacillus subtilis (strain 168).